The following is a 105-amino-acid chain: Large ribosomal subunit protein uL18c (105 aa).

Belongs to the universal ribosomal protein uL18 family. In terms of assembly, part of the 50S ribosomal subunit; contacts the 5S rRNA.

The protein resides in the plastid. The protein localises to the chloroplast. Functionally, binds 5S rRNA, forms part of the central protuberance of the 50S subunit. This chain is Large ribosomal subunit protein uL18c (rpl18), found in Gracilaria tenuistipitata var. liui (Red alga).